Reading from the N-terminus, the 275-residue chain is MANIKAKKYYSYAKINLFLHILNKRTDGYHNLQTWFTFLDLKDQLTFSFNNSREINISSNISIAAKQDNLVYKAIKKFQQSYRVQDIGVDIEIKKNIPMGAGLGGGSSNAATTLIALRDYYLPQLSNEEMIPLAAKLGADVSIFVYGKSAWAEGIGEILYHKDFSPQYALLIKPDIHISTKEFFTSEDLIKSSVLISKDLGFDKSIMHNDFENVFYAKYPEFSQYLKELDSDFRMTGTGSCFYLLSADKNKLEQLARKINKPLDKWLVKTLNYVY.

Lys14 is an active-site residue. 98-108 contributes to the ATP binding site; that stretch reads PMGAGLGGGSS. Residue Asp140 is part of the active site.

This sequence belongs to the GHMP kinase family. IspE subfamily.

The catalysed reaction is 4-CDP-2-C-methyl-D-erythritol + ATP = 4-CDP-2-C-methyl-D-erythritol 2-phosphate + ADP + H(+). The protein operates within isoprenoid biosynthesis; isopentenyl diphosphate biosynthesis via DXP pathway; isopentenyl diphosphate from 1-deoxy-D-xylulose 5-phosphate: step 3/6. Functionally, catalyzes the phosphorylation of the position 2 hydroxy group of 4-diphosphocytidyl-2C-methyl-D-erythritol. The sequence is that of 4-diphosphocytidyl-2-C-methyl-D-erythritol kinase from Francisella tularensis subsp. tularensis (strain WY96-3418).